The chain runs to 255 residues: ATP synthase subunit a (255 aa).

6 helical membrane-spanning segments follow: residues 28–48 (VDSLIMSFSLGALFCYLFWLG), 86–106 (IAPLALTIFCWIFLMNLMDLV), 125–145 (ILPTVDLNVTFALSISVFFLI), 164–184 (FHPFGPWLLPFNLILNIIELI), 203–223 (LIFILISLLPWWIQWALGTPW), and 224–244 (AIFHILVIPLQAFIFMMLTVV).

It belongs to the ATPase A chain family. F-type ATPases have 2 components, CF(1) - the catalytic core - and CF(0) - the membrane proton channel. CF(1) has five subunits: alpha(3), beta(3), gamma(1), delta(1), epsilon(1). CF(0) has three main subunits: a(1), b(2) and c(9-12). The alpha and beta chains form an alternating ring which encloses part of the gamma chain. CF(1) is attached to CF(0) by a central stalk formed by the gamma and epsilon chains, while a peripheral stalk is formed by the delta and b chains.

The protein resides in the cell inner membrane. Functionally, key component of the proton channel; it plays a direct role in the translocation of protons across the membrane. The sequence is that of ATP synthase subunit a from Alkalilimnicola ehrlichii (strain ATCC BAA-1101 / DSM 17681 / MLHE-1).